The primary structure comprises 69 residues: Large ribosomal subunit protein uL29 (69 aa).

It belongs to the universal ribosomal protein uL29 family.

The protein is Large ribosomal subunit protein uL29 of Treponema denticola (strain ATCC 35405 / DSM 14222 / CIP 103919 / JCM 8153 / KCTC 15104).